We begin with the raw amino-acid sequence, 470 residues long: Sorting nexin-17 (470 aa).

Residues 1 to 109 form the PX domain; sequence MHFSIPETES…SFLRRAQQET (109 aa). Residues Arg-36, Ser-38, Lys-62, and Arg-75 each contribute to the a 1,2-diacyl-sn-glycero-3-phospho-(1D-myo-inositol-3-phosphate) site. One can recognise a Ras-associating domain in the interval 115-206; sequence EEVSLEVLLS…YKIVLRKSYW (92 aa). The FERM-like stretch occupies residues 115–432; it reads EEVSLEVLLS…DASRESMVKL (318 aa). The tract at residues 270 to 432 is PTB-like F3 module; the sequence is GYLRFDACVA…DASRESMVKL (163 aa). The disordered stretch occupies residues 401–425; the sequence is GGNLRRSDSQQAVKSPPLLESPDAS. Ser-407, Ser-409, Ser-415, Ser-421, Ser-437, and Ser-440 each carry phosphoserine.

The protein belongs to the sorting nexin family. As to quaternary structure, monomer. Interacts with APP (via cytoplasmic YXNPXY motif). Interacts with KIF1B. Interacts with the C-termini of P-selectin, PTC, LDLR, VLDLR, LRP1 and LRP8. Interacts with KRIT1 (via N-terminus). Interacts with HRAS. Interacts with ITGB1 and ITGB5 (via NPxY motif). Interacts with CCDC22 and CCDC93; the interaction associates SNX17 with the CCC complex. Interacts (via C-terminus) with VPS26C and VPS35L; the interactions are direct and associate SNX17 with the retriever complex.

The protein localises to the cytoplasm. It is found in the early endosome. It localises to the cytoplasmic vesicle membrane. In terms of biological role, critical regulator of endosomal recycling of numerous surface proteins, including integrins, signaling receptor and channels. Binds to NPxY sequences in the cytoplasmic tails of target cargos. Associates with retriever and CCC complexes to prevent lysosomal degradation and promote cell surface recycling of numerous cargos such as integrins ITGB1, ITGB5 and their associated alpha subunits. Also required for maintenance of normal cell surface levels of APP and LRP1. Interacts with membranes containing phosphatidylinositol 3-phosphate (PtdIns(3P)). This Rattus norvegicus (Rat) protein is Sorting nexin-17 (Snx17).